Here is a 166-residue protein sequence, read N- to C-terminus: Large ribosomal subunit protein uL10 (166 aa).

It belongs to the universal ribosomal protein uL10 family. Part of the ribosomal stalk of the 50S ribosomal subunit. The N-terminus interacts with L11 and the large rRNA to form the base of the stalk. The C-terminus forms an elongated spine to which L12 dimers bind in a sequential fashion forming a multimeric L10(L12)X complex.

Forms part of the ribosomal stalk, playing a central role in the interaction of the ribosome with GTP-bound translation factors. This is Large ribosomal subunit protein uL10 from Shewanella oneidensis (strain ATCC 700550 / JCM 31522 / CIP 106686 / LMG 19005 / NCIMB 14063 / MR-1).